The sequence spans 475 residues: Aspartyl/glutamyl-tRNA(Asn/Gln) amidotransferase subunit B (475 aa).

The protein belongs to the GatB/GatE family. GatB subfamily. Heterotrimer of A, B and C subunits.

The catalysed reaction is L-glutamyl-tRNA(Gln) + L-glutamine + ATP + H2O = L-glutaminyl-tRNA(Gln) + L-glutamate + ADP + phosphate + H(+). It catalyses the reaction L-aspartyl-tRNA(Asn) + L-glutamine + ATP + H2O = L-asparaginyl-tRNA(Asn) + L-glutamate + ADP + phosphate + 2 H(+). Functionally, allows the formation of correctly charged Asn-tRNA(Asn) or Gln-tRNA(Gln) through the transamidation of misacylated Asp-tRNA(Asn) or Glu-tRNA(Gln) in organisms which lack either or both of asparaginyl-tRNA or glutaminyl-tRNA synthetases. The reaction takes place in the presence of glutamine and ATP through an activated phospho-Asp-tRNA(Asn) or phospho-Glu-tRNA(Gln). The polypeptide is Aspartyl/glutamyl-tRNA(Asn/Gln) amidotransferase subunit B (Thermoanaerobacter pseudethanolicus (strain ATCC 33223 / 39E) (Clostridium thermohydrosulfuricum)).